The chain runs to 132 residues: MKGMRSNIPRALNAGAQIACVDNTGAKVVEIISVKKYRGVKNRMPCAGIGDMCVVSVKKGTPEMRKQVLLAVVVRQKQEFRRPDGLHVSFEDNAMVITDEEGIPKGTDIKGPVAREVAERFPKIGTTASIIV.

This sequence belongs to the universal ribosomal protein uL14 family. As to quaternary structure, part of the 50S ribosomal subunit. Forms a cluster with proteins L3 and L24e, part of which may contact the 16S rRNA in 2 intersubunit bridges.

Functionally, binds to 23S rRNA. Forms part of two intersubunit bridges in the 70S ribosome. This Methanosarcina acetivorans (strain ATCC 35395 / DSM 2834 / JCM 12185 / C2A) protein is Large ribosomal subunit protein uL14.